The primary structure comprises 268 residues: MKTNVDTGLIKELRSRTGAGFLACKRALLEENGDIESAIDNLRKSGKLTAEKKINNITNQGAIFSKIKNNIGVMLELNCETDFVSKDNLFICLGEDILVEALEKRIKDINQLKVIFESRRTELVSKVGENINIRRFHLIEGENIFSYLHGVRIGVLVSSSSLNKTILKNIAMHIAASKPEYLHPKNVSSEVFQREYQIQLELAKNLNKPSNLLKKIIDGRMEKFVNNISLTSQSFIMNPIKTVGDILNENHAHIESFIRFELGELVSK.

Residues 81-84 (TDFV) form an involved in Mg(2+) ion dislocation from EF-Tu region.

It belongs to the EF-Ts family.

Its subcellular location is the cytoplasm. Its function is as follows. Associates with the EF-Tu.GDP complex and induces the exchange of GDP to GTP. It remains bound to the aminoacyl-tRNA.EF-Tu.GTP complex up to the GTP hydrolysis stage on the ribosome. This Buchnera aphidicola subsp. Acyrthosiphon pisum (strain 5A) protein is Elongation factor Ts.